The chain runs to 145 residues: Large ribosomal subunit protein uL13 (145 aa).

The protein belongs to the universal ribosomal protein uL13 family. Part of the 50S ribosomal subunit.

Functionally, this protein is one of the early assembly proteins of the 50S ribosomal subunit, although it is not seen to bind rRNA by itself. It is important during the early stages of 50S assembly. The polypeptide is Large ribosomal subunit protein uL13 (Staphylococcus saprophyticus subsp. saprophyticus (strain ATCC 15305 / DSM 20229 / NCIMB 8711 / NCTC 7292 / S-41)).